The chain runs to 144 residues: D-aminoacyl-tRNA deacylase (144 aa).

The Gly-cisPro motif, important for rejection of L-amino acids motif lies at 136 to 137 (GP).

This sequence belongs to the DTD family. In terms of assembly, homodimer.

The protein localises to the cytoplasm. The enzyme catalyses glycyl-tRNA(Ala) + H2O = tRNA(Ala) + glycine + H(+). It catalyses the reaction a D-aminoacyl-tRNA + H2O = a tRNA + a D-alpha-amino acid + H(+). In terms of biological role, an aminoacyl-tRNA editing enzyme that deacylates mischarged D-aminoacyl-tRNAs. Also deacylates mischarged glycyl-tRNA(Ala), protecting cells against glycine mischarging by AlaRS. Acts via tRNA-based rather than protein-based catalysis; rejects L-amino acids rather than detecting D-amino acids in the active site. By recycling D-aminoacyl-tRNA to D-amino acids and free tRNA molecules, this enzyme counteracts the toxicity associated with the formation of D-aminoacyl-tRNA entities in vivo and helps enforce protein L-homochirality. The protein is D-aminoacyl-tRNA deacylase of Vibrio vulnificus (strain CMCP6).